The sequence spans 205 residues: Protein GrpE (205 aa).

This sequence belongs to the GrpE family. In terms of assembly, homodimer.

Its subcellular location is the cytoplasm. Participates actively in the response to hyperosmotic and heat shock by preventing the aggregation of stress-denatured proteins, in association with DnaK and GrpE. It is the nucleotide exchange factor for DnaK and may function as a thermosensor. Unfolded proteins bind initially to DnaJ; upon interaction with the DnaJ-bound protein, DnaK hydrolyzes its bound ATP, resulting in the formation of a stable complex. GrpE releases ADP from DnaK; ATP binding to DnaK triggers the release of the substrate protein, thus completing the reaction cycle. Several rounds of ATP-dependent interactions between DnaJ, DnaK and GrpE are required for fully efficient folding. This is Protein GrpE from Shewanella loihica (strain ATCC BAA-1088 / PV-4).